Here is a 155-residue protein sequence, read N- to C-terminus: Aspartate carbamoyltransferase regulatory chain (155 aa).

Residues cysteine 110, cysteine 115, cysteine 139, and cysteine 142 each coordinate Zn(2+).

The protein belongs to the PyrI family. In terms of assembly, contains catalytic and regulatory chains. It depends on Zn(2+) as a cofactor.

In terms of biological role, involved in allosteric regulation of aspartate carbamoyltransferase. The sequence is that of Aspartate carbamoyltransferase regulatory chain from Yersinia pseudotuberculosis serotype IB (strain PB1/+).